The primary structure comprises 122 residues: MIQMQTILDVADNSGARRVMCIKVLGGSKRRYASVGDIIKVAVKDAAPRGRVKKGDVYNAVVVRTAKGVRRPDGALIKFDNNAAVLLNNKLEPLGTRIFGPVTRELRTERFMKIVSLAPEVL.

Belongs to the universal ribosomal protein uL14 family. Part of the 50S ribosomal subunit. Forms a cluster with proteins L3 and L19. In the 70S ribosome, L14 and L19 interact and together make contacts with the 16S rRNA in bridges B5 and B8.

Binds to 23S rRNA. Forms part of two intersubunit bridges in the 70S ribosome. The sequence is that of Large ribosomal subunit protein uL14 from Neisseria meningitidis serogroup C (strain 053442).